Here is a 149-residue protein sequence, read N- to C-terminus: Endoribonuclease YbeY (149 aa).

Residues H101, H105, and H111 each coordinate Zn(2+).

Belongs to the endoribonuclease YbeY family. Zn(2+) serves as cofactor.

The protein localises to the cytoplasm. Its function is as follows. Single strand-specific metallo-endoribonuclease involved in late-stage 70S ribosome quality control and in maturation of the 3' terminus of the 16S rRNA. This is Endoribonuclease YbeY from Thermotoga neapolitana (strain ATCC 49049 / DSM 4359 / NBRC 107923 / NS-E).